Here is a 260-residue protein sequence, read N- to C-terminus: Ribose-5-phosphate isomerase A (260 aa).

Substrate contacts are provided by residues 33 to 36 (TGST), 89 to 92 (DGAD), and 102 to 105 (KGGG). E111 functions as the Proton acceptor in the catalytic mechanism. K129 lines the substrate pocket.

It belongs to the ribose 5-phosphate isomerase family. In terms of assembly, homodimer.

It catalyses the reaction aldehydo-D-ribose 5-phosphate = D-ribulose 5-phosphate. Its pathway is carbohydrate degradation; pentose phosphate pathway; D-ribose 5-phosphate from D-ribulose 5-phosphate (non-oxidative stage): step 1/1. Its function is as follows. Catalyzes the reversible conversion of ribose-5-phosphate to ribulose 5-phosphate. The polypeptide is Ribose-5-phosphate isomerase A (Dinoroseobacter shibae (strain DSM 16493 / NCIMB 14021 / DFL 12)).